The sequence spans 417 residues: Synaptic vesicle membrane protein VAT-1 homolog-like (417 aa).

Disordered stretches follow at residues 1 to 33 and 382 to 417; these read MAKE…GSHR and PTPL…PFIQ. Serine 390 carries the phosphoserine modification. Residues threonine 391 and threonine 393 each carry the phosphothreonine modification. Residue serine 394 is modified to Phosphoserine. Residues 395-405 show a composition bias toward acidic residues; the sequence is EAGEEEEDHEG. Over residues 406–417 the composition is skewed to basic and acidic residues; sequence DSENKERMPFIQ.

This sequence belongs to the zinc-containing alcohol dehydrogenase family. Quinone oxidoreductase subfamily.

The sequence is that of Synaptic vesicle membrane protein VAT-1 homolog-like (Vat1l) from Mus musculus (Mouse).